A 150-amino-acid polypeptide reads, in one-letter code: Cytochrome c oxidase subunit 5A, mitochondrial (150 aa).

The transit peptide at 1-41 (MLGAALRRCAVAATTRAGPRGLLHSARTPGPAAAIQSVRCY) directs the protein to the mitochondrion. Residues 2-17 (LGAALRRCAVAATTRA) carry the SIFI-degron motif. 2 positions are modified to N6-acetyllysine: Lys-87 and Lys-113. Thr-141 carries the post-translational modification Phosphothreonine.

The protein belongs to the cytochrome c oxidase subunit 5A family. In terms of assembly, component of the cytochrome c oxidase (complex IV, CIV), a multisubunit enzyme composed of 14 subunits. The complex is composed of a catalytic core of 3 subunits MT-CO1, MT-CO2 and MT-CO3, encoded in the mitochondrial DNA, and 11 supernumerary subunits COX4I, COX5A, COX5B, COX6A, COX6B, COX6C, COX7A, COX7B, COX7C, COX8 and NDUFA4, which are encoded in the nuclear genome. The complex exists as a monomer or a dimer and forms supercomplexes (SCs) in the inner mitochondrial membrane with NADH-ubiquinone oxidoreductase (complex I, CI) and ubiquinol-cytochrome c oxidoreductase (cytochrome b-c1 complex, complex III, CIII), resulting in different assemblies (supercomplex SCI(1)III(2)IV(1) and megacomplex MCI(2)III(2)IV(2)). Interacts with AFG1L. Interacts with RAB5IF. In terms of processing, in response to mitochondrial stress, the precursor protein is ubiquitinated by the SIFI complex in the cytoplasm before mitochondrial import, leading to its degradation. Within the SIFI complex, UBR4 initiates ubiquitin chain that are further elongated or branched by KCMF1.

It is found in the mitochondrion inner membrane. It functions in the pathway energy metabolism; oxidative phosphorylation. Component of the cytochrome c oxidase, the last enzyme in the mitochondrial electron transport chain which drives oxidative phosphorylation. The respiratory chain contains 3 multisubunit complexes succinate dehydrogenase (complex II, CII), ubiquinol-cytochrome c oxidoreductase (cytochrome b-c1 complex, complex III, CIII) and cytochrome c oxidase (complex IV, CIV), that cooperate to transfer electrons derived from NADH and succinate to molecular oxygen, creating an electrochemical gradient over the inner membrane that drives transmembrane transport and the ATP synthase. Cytochrome c oxidase is the component of the respiratory chain that catalyzes the reduction of oxygen to water. Electrons originating from reduced cytochrome c in the intermembrane space (IMS) are transferred via the dinuclear copper A center (CU(A)) of subunit 2 and heme A of subunit 1 to the active site in subunit 1, a binuclear center (BNC) formed by heme A3 and copper B (CU(B)). The BNC reduces molecular oxygen to 2 water molecules using 4 electrons from cytochrome c in the IMS and 4 protons from the mitochondrial matrix. The polypeptide is Cytochrome c oxidase subunit 5A, mitochondrial (COX5A) (Gorilla gorilla gorilla (Western lowland gorilla)).